The following is a 430-amino-acid chain: Serine--tRNA ligase (430 aa).

Position 235–237 (235–237 (TAE)) interacts with L-serine. Residues 266–268 (RRE) and Val282 each bind ATP. Glu289 contributes to the L-serine binding site. ATP is bound at residue 353–356 (EASS). Ser389 lines the L-serine pocket.

Belongs to the class-II aminoacyl-tRNA synthetase family. Type-1 seryl-tRNA synthetase subfamily. In terms of assembly, homodimer. The tRNA molecule binds across the dimer.

It localises to the cytoplasm. The catalysed reaction is tRNA(Ser) + L-serine + ATP = L-seryl-tRNA(Ser) + AMP + diphosphate + H(+). It carries out the reaction tRNA(Sec) + L-serine + ATP = L-seryl-tRNA(Sec) + AMP + diphosphate + H(+). It participates in aminoacyl-tRNA biosynthesis; selenocysteinyl-tRNA(Sec) biosynthesis; L-seryl-tRNA(Sec) from L-serine and tRNA(Sec): step 1/1. Catalyzes the attachment of serine to tRNA(Ser). Is also able to aminoacylate tRNA(Sec) with serine, to form the misacylated tRNA L-seryl-tRNA(Sec), which will be further converted into selenocysteinyl-tRNA(Sec). The polypeptide is Serine--tRNA ligase (Chlorobium luteolum (strain DSM 273 / BCRC 81028 / 2530) (Pelodictyon luteolum)).